The sequence spans 442 residues: Protein bag of marbles (442 aa).

The tract at residues 201-250 is required for interaction with ubiquitin; it reads FDMPVKSTMPKSLNVRYQLQVLCTKVERFLVQQRRTLEANRHFDFEKYDE. The interval 408-442 is disordered; it reads VSMEQPSASEEEFEETEEVPSSPPRHTGRVPRFRS. Residues 416 to 425 are compositionally biased toward acidic residues; the sequence is SEEEFEETEE. The span at 433–442 shows a compositional bias: basic residues; sequence HTGRVPRFRS.

Interacts (via central region) with ubiquitin. Interacts (via C-terminus) with otu (via OTU domain); the interaction enhances otu aggregation into amyloid-like structures and enhances its deubiquitinase activity. Together with otu interacts with CycA/cyclin-A (via C-terminus); the interaction stabilizes CycA by promoting and enhancing otu dependent deubiquitination of CycA. Together with otu interacts with Traf6. Part of a complex composed of at least tut, bam and bgcn; complex formation does not require RNA. Interacts (via C-terminus) with bgcn; the interaction is direct and is not disrupted by eIF4A. Interacts with eIF4A (via multiple contacts); the interaction is direct and is not disrupted by bgcn. Interacts (via N-terminus) with tut; the interaction is direct and mediates the interaction between tut and bgcn. As part of the bam-bgcn-tut complex associates with twin; may recruit the CCR4-NOT1 deadenylation complex to mRNA 3'-UTRs to mediate post-transcriptional regulation of expression. Part of a complex composed of at least mei-P26, bam, bgcn and Sxl; this complex is involved in translational repression of nanos mRNA. Post-translationally, ubiquitinated (C-terminal region). In cystoblasts and/or very early cystocytes in testis (at protein level); expression levels are regulated by mei-P26. In cystoblasts and/or very early cystocytes in ovary. Expressed in the gut; expression levels increase with age.

It localises to the cytoplasm. In terms of biological role, regulatory component of a deubiquitinase complex consisting of bam and otu. The complex deubiquitinates K63-linked polyubiquitinated proteins, antagonizing the ubiquitination activity of Traf6 and regulating the IMD immune signaling pathway. Otu-bam deubiquitinase activity is regulated by Traf6 dependent immune signaling regulation of bam expression levels; this forms a feedback loop that regulates the IMD immune signaling pathway and balances gut immune activity during aging. The complex deubiquitinates and stabilizes CycA/cyclin-A to regulate CycA-dependent differentiation. Required to initiate both male and female gametogenesis. Part of a complex with bgcn involved in 3'-UTR-dependent translational repression of a subset of mRNAs, including those for mei-P26, nanos and shg/E-cadherin. Repression of mei-P26 is targeted by let-7 miRNA. Involved in a regulatory cascade with mei-P26 to control the progression of cystocytes through transit amplification and the switch to spermatocyte differentiation; mei-P26 facilitates bam accumulation, which in turn represses translation of mei-P26. Forms a complex with tut and bgcn involved in 3'-UTR-dependent post-transcriptional repression of several 3'-RNA processing factors, which promotes germline stem cell lineage differentiation and mitosis-to-meiosis transition. This is Protein bag of marbles from Drosophila melanogaster (Fruit fly).